Here is a 1039-residue protein sequence, read N- to C-terminus: DIS3-like exonuclease 1 (1039 aa).

Positions 221 to 309 (PEHLPLEILE…KGRNGALCEN (89 aa)) constitute a CSD1 domain. The 67-residue stretch at 359–425 (VLVMPWDYRI…AEIATILVEN (67 aa)) folds into the CSD2 domain. The region spanning 458-807 (RLDLRKTHLV…VHRLLLAAVN (350 aa)) is the RNB domain.

It belongs to the RNR ribonuclease family. In terms of assembly, component of the RNA exosome complex. Requires Mg(2+) as cofactor.

The protein localises to the cytoplasm. It carries out the reaction Exonucleolytic cleavage in the 3'- to 5'-direction to yield nucleoside 5'-phosphates.. Its function is as follows. Catalytic component of the RNA exosome complex which has 3'-&gt;5' exoribonuclease activity and participates in a multitude of cellular RNA processing and degradation events. This is DIS3-like exonuclease 1 (dis3l) from Xenopus tropicalis (Western clawed frog).